The following is a 265-amino-acid chain: Thiazole synthase (265 aa).

Lysine 107 acts as the Schiff-base intermediate with DXP in catalysis. Residues glycine 168, 194-195 (AG), and 216-217 (NT) contribute to the 1-deoxy-D-xylulose 5-phosphate site.

This sequence belongs to the ThiG family. Homotetramer. Forms heterodimers with either ThiH or ThiS.

Its subcellular location is the cytoplasm. It carries out the reaction [ThiS sulfur-carrier protein]-C-terminal-Gly-aminoethanethioate + 2-iminoacetate + 1-deoxy-D-xylulose 5-phosphate = [ThiS sulfur-carrier protein]-C-terminal Gly-Gly + 2-[(2R,5Z)-2-carboxy-4-methylthiazol-5(2H)-ylidene]ethyl phosphate + 2 H2O + H(+). It participates in cofactor biosynthesis; thiamine diphosphate biosynthesis. Catalyzes the rearrangement of 1-deoxy-D-xylulose 5-phosphate (DXP) to produce the thiazole phosphate moiety of thiamine. Sulfur is provided by the thiocarboxylate moiety of the carrier protein ThiS. In vitro, sulfur can be provided by H(2)S. The sequence is that of Thiazole synthase from Pseudomonas paraeruginosa (strain DSM 24068 / PA7) (Pseudomonas aeruginosa (strain PA7)).